The sequence spans 359 residues: MTMENKPAGQNGLTYAQAGVDIDAGNLMVEKIKPLVRSTRRPGADGEIGGFGGLFDLKAAGFKDPVLVAANDGVGTKLKIAIDADIHDTVGIDLVAMCVNDLVVQGAEPLFFLDYYATGKLSPDQGVAIVSGIAEGCRQAGCALIGGETAEMPGMYRDGDYDLAGFAVGAAERDRLLPRGDIAEGDIILGLASSGVHSNGFSLVRRIVELSGLGWKSQAPFQPGATLGEALLTPTRIYVKPLLAAIRACDGIKALAHITGGGFPDNIPRVLPKGLAAEIDLPAIAVPPVFSWLAKTGNVEPNEMLRTFNCGIGMIAVVNPAKVDEVIAALAAEGEKVVTLGRMTRREKDGVIYKGQLAL.

This sequence belongs to the AIR synthase family.

The protein localises to the cytoplasm. The enzyme catalyses 2-formamido-N(1)-(5-O-phospho-beta-D-ribosyl)acetamidine + ATP = 5-amino-1-(5-phospho-beta-D-ribosyl)imidazole + ADP + phosphate + H(+). It functions in the pathway purine metabolism; IMP biosynthesis via de novo pathway; 5-amino-1-(5-phospho-D-ribosyl)imidazole from N(2)-formyl-N(1)-(5-phospho-D-ribosyl)glycinamide: step 2/2. The polypeptide is Phosphoribosylformylglycinamidine cyclo-ligase (Brucella canis (strain ATCC 23365 / NCTC 10854 / RM-666)).